A 345-amino-acid chain; its full sequence is Ryncolin-1 (345 aa).

The N-terminal stretch at 1–19 is a signal peptide; that stretch reads MKPWAAFHLIFLVASSLEG. The segment at 48–118 is disordered; the sequence is ILQSQPGIPG…DKGDKGEDCN (71 aa). Residues 57–114 enclose the Collagen-like domain; it reads GIPGVPGTNGSEGLKGDPGPQGPPGIRGPDGIRGEAGPKGDKGDQGDKGDKGDKGDKG. Residues 86 to 116 show a composition bias toward basic and acidic residues; the sequence is DGIRGEAGPKGDKGDQGDKGDKGDKGDKGED. Residues 121–339 form the Fibrinogen C-terminal domain; the sequence is GCLPTEVRNC…YADMKIRPQQ (219 aa). 2 disulfides stabilise this stretch: C130-C158 and C282-C295.

It belongs to the ficolin lectin family. Veficolin subfamily. In terms of processing, hydroxylated, possibly at Pro-80. In terms of tissue distribution, expressed by the venom duct.

The protein localises to the secreted. In terms of biological role, initiates complement activation and/or interferes in platelet aggregation and/or blood coagulation. The polypeptide is Ryncolin-1 (Cerberus rynchops (Dog-faced water snake)).